The sequence spans 165 residues: Neuritin-like protein (165 aa).

The N-terminal stretch at 1–35 is a signal peptide; that stretch reads MMRCCRRRCCCRQPPHALRPLLLLPLVLLPPLAAA. Ala-139 carries GPI-anchor amidated alanine lipidation. A propeptide spans 140–165 (removed in mature form); sequence PALPMAPAPPLLAAALALAYLLRPLA.

It belongs to the neuritin family.

It is found in the cell membrane. The sequence is that of Neuritin-like protein (NRN1L) from Homo sapiens (Human).